The chain runs to 687 residues: Glycine--tRNA ligase beta subunit (687 aa).

It belongs to the class-II aminoacyl-tRNA synthetase family. In terms of assembly, tetramer of two alpha and two beta subunits.

The protein resides in the cytoplasm. It catalyses the reaction tRNA(Gly) + glycine + ATP = glycyl-tRNA(Gly) + AMP + diphosphate. The polypeptide is Glycine--tRNA ligase beta subunit (Neisseria meningitidis serogroup C / serotype 2a (strain ATCC 700532 / DSM 15464 / FAM18)).